We begin with the raw amino-acid sequence, 279 residues long: Protein phosphatase 1 regulatory subunit 3E (279 aa).

Phosphoserine is present on residues serine 16 and serine 33. The disordered stretch occupies residues 28–87 (RSQRPSLEEESEEEPGEGGTRPGARSRAHVPGRGRRARSAPAGGGGARTARSRSPDTRKR). The segment covering 51-65 (ARSRAHVPGRGRRAR) has biased composition (basic residues). Serine 66 carries the post-translational modification Phosphoserine. The PP1-binding motif motif lies at 87–90 (RVRF). The region spanning 154-259 (AARLQAQRIC…NNGGRDYALL (106 aa)) is the CBM21 domain. Residues 176 to 198 (GSARVLDLAYEKRVSVRWSADGW) are glycogen-binding motif. Residues 248–256 (WDNNGGRDY) are substrate-binding motif.

In terms of biological role, acts as a glycogen-targeting subunit for PP1. PP1 is involved in glycogen metabolism and contributes to the activation of glycogen synthase leading to an increase in glycogen synthesis. The sequence is that of Protein phosphatase 1 regulatory subunit 3E (Ppp1r3e) from Mus musculus (Mouse).